Consider the following 295-residue polypeptide: Methionine aminopeptidase (295 aa).

Histidine 62 contacts substrate. Aspartate 82, aspartate 93, and histidine 153 together coordinate a divalent metal cation. A substrate-binding site is contributed by histidine 161. A divalent metal cation contacts are provided by glutamate 187 and glutamate 280.

In terms of assembly, monomer. It depends on Co(2+) as a cofactor. Zn(2+) is required as a cofactor. The cofactor is Mn(2+). Requires Fe(2+) as cofactor.

The enzyme catalyses Release of N-terminal amino acids, preferentially methionine, from peptides and arylamides.. Functionally, removes the N-terminal methionine from nascent proteins. The N-terminal methionine is often cleaved when the second residue in the primary sequence is small and uncharged (Met-Ala-, Cys, Gly, Pro, Ser, Thr, or Val). In Pyrococcus furiosus (strain ATCC 43587 / DSM 3638 / JCM 8422 / Vc1), this protein is Methionine aminopeptidase.